The primary structure comprises 200 residues: NAD(P)H-quinone oxidoreductase subunit 6, chloroplastic (200 aa).

The next 5 membrane-spanning stretches (helical) occupy residues I13–S33, I35–A55, A64–I84, I102–S122, and L156–I176.

Belongs to the complex I subunit 6 family. As to quaternary structure, NDH is composed of at least 16 different subunits, 5 of which are encoded in the nucleus.

The protein localises to the plastid. Its subcellular location is the chloroplast thylakoid membrane. The catalysed reaction is a plastoquinone + NADH + (n+1) H(+)(in) = a plastoquinol + NAD(+) + n H(+)(out). It catalyses the reaction a plastoquinone + NADPH + (n+1) H(+)(in) = a plastoquinol + NADP(+) + n H(+)(out). NDH shuttles electrons from NAD(P)H:plastoquinone, via FMN and iron-sulfur (Fe-S) centers, to quinones in the photosynthetic chain and possibly in a chloroplast respiratory chain. The immediate electron acceptor for the enzyme in this species is believed to be plastoquinone. Couples the redox reaction to proton translocation, and thus conserves the redox energy in a proton gradient. The chain is NAD(P)H-quinone oxidoreductase subunit 6, chloroplastic (ndhG) from Physcomitrium patens (Spreading-leaved earth moss).